The primary structure comprises 30 residues: Putative UPF0377 protein YNR075C-A (30 aa).

This sequence belongs to the UPF0377 family.

The chain is Putative UPF0377 protein YNR075C-A from Saccharomyces cerevisiae (strain ATCC 204508 / S288c) (Baker's yeast).